Reading from the N-terminus, the 45-residue chain is Large ribosomal subunit protein bL34 (45 aa).

Residues 1–45 (MTKRTFGGTSRKRKRVSGFRVRMRSHTGRRVIKSRRQKGRERIAV) form a disordered region. Residues 10-39 (SRKRKRVSGFRVRMRSHTGRRVIKSRRQKG) are compositionally biased toward basic residues.

Belongs to the bacterial ribosomal protein bL34 family.

The protein is Large ribosomal subunit protein bL34 of Prochlorococcus marinus (strain MIT 9301).